The following is a 475-amino-acid chain: Putative amidase AmiD (475 aa).

Active-site charge relay system residues include K93 and S166. The Acyl-ester intermediate role is filled by S190.

The protein belongs to the amidase family.

The enzyme catalyses a monocarboxylic acid amide + H2O = a monocarboxylate + NH4(+). The chain is Putative amidase AmiD (amiD) from Mycobacterium bovis (strain ATCC BAA-935 / AF2122/97).